A 402-amino-acid polypeptide reads, in one-letter code: Phosphoglycerate kinase (402 aa).

Residues 30–32, Arg-46, 70–73, Arg-126, and Arg-159 each bind substrate; these read DFN and HLGR. Residues Lys-210, Glu-332, and 358 to 361 contribute to the ATP site; that span reads GGDT.

Belongs to the phosphoglycerate kinase family. In terms of assembly, monomer.

It localises to the cytoplasm. It carries out the reaction (2R)-3-phosphoglycerate + ATP = (2R)-3-phospho-glyceroyl phosphate + ADP. It participates in carbohydrate degradation; glycolysis; pyruvate from D-glyceraldehyde 3-phosphate: step 2/5. The chain is Phosphoglycerate kinase from Helicobacter hepaticus (strain ATCC 51449 / 3B1).